Here is a 497-residue protein sequence, read N- to C-terminus: Serine/threonine-protein kinase 3 (497 aa).

The residue at position 1 (M1) is an N-acetylmethionine. Residues 1-20 form a disordered region; it reads MEQPPASKSKLKKLSEDSLT. Phosphoserine is present on S15. The region spanning 27–278 is the Protein kinase domain; sequence FDVLEKLGEG…ATQLLQHPFI (252 aa). Residues 33–41 and K56 contribute to the ATP site; that span reads LGEGSYGSV. T117 carries the phosphothreonine; by PKB/AKT1 modification. D146 acts as the Proton acceptor in catalysis. Mg(2+)-binding residues include N151 and D164. T180 bears the Phosphothreonine; by autocatalysis mark. A coiled-coil region spans residues 287-328; sequence LRDLIAEAMEIKAKRHEEQQRELEEEEENSDEDELDSHTMVK. 2 disordered regions span residues 301 to 343 and 368 to 394; these read RHEE…TSTM and NSEE…SPQV. Acidic residues predominate over residues 309–321; the sequence is LEEEEENSDEDEL. S316 carries the phosphoserine modification. Positions 326–343 are enriched in polar residues; it reads MVKTSSESVGTMRATSTM. T336 is modified (phosphothreonine). A coiled-coil region spans residues 366–387; the sequence is VINSEEEEEEEEEEEEDGTMKR. Residues 369–382 are compositionally biased toward acidic residues; the sequence is SEEEEEEEEEEEED. T384 carries the phosphothreonine modification. T390 is modified (phosphothreonine; by PKB/AKT1). Phosphoserine is present on residues S391 and S450. Residues 443-490 form the SARAH domain; that stretch reads FDFLKNLSLEELQMRLKALDPMMEREIEELHQRYSAKRQPILDAMDAK. Residues 448-479 are a coiled coil; that stretch reads NLSLEELQMRLKALDPMMEREIEELHQRYSAK.

The protein belongs to the protein kinase superfamily. STE Ser/Thr protein kinase family. STE20 subfamily. Homodimer; mediated via the coiled-coil region. Interacts with NORE1, which inhibits autoactivation. Interacts with and stabilizes SAV1. Interacts with RAF1, which prevents dimerization and phosphorylation. Interacts with RASSF1. Interacts (via SARAH domain) with isoform 1 of NEK2. Interacts with ESR1 only in the presence of SAV1. Interacts with PKB/AKT1. Forms a tripartite complex with MOBKL1B and STK38. Interacts with RASSF2 (via SARAH domain). Interacts with DLG5 (via PDZ domain 3). Interacts with LATS1; this interaction is inhibited in the presence of DLG5. Interacts with MARK3 in the presence of DLG5. Interacts with RASSF5; this interaction inhibits STK3 autoactivation through heterodimerization. Interacts (when phosphorylated) with SLMAP (via FHA domain); the interaction associates STK3 with the STRIPAK complex. Requires Mg(2+) as cofactor. Post-translationally, autophosphorylated on two residues Thr-174 and Thr-180, leading to activation. Phosphorylation at Thr-117 and Thr-390 by PKB/AKT1, leads to inhibition of its: cleavage, kinase activity, autophosphorylation at Thr-180, binding to RASSF1 and nuclear translocation, and increase in its binding to RAF1. Phosphorylated at Ser-15 by PLK1, leading to activation. In terms of processing, proteolytically cleaved by caspase-3 during apoptosis. Proteolytic cleavage results in kinase activation and nuclear translocation of the truncated form (MST1/N). Ubiquitinated by TRIM69; leading to its redistribution to the perinuclear cytoskeleton.

Its subcellular location is the cytoplasm. It is found in the nucleus. The catalysed reaction is L-seryl-[protein] + ATP = O-phospho-L-seryl-[protein] + ADP + H(+). The enzyme catalyses L-threonyl-[protein] + ATP = O-phospho-L-threonyl-[protein] + ADP + H(+). With respect to regulation, inhibited by the C-terminal non-catalytic region. Activated by caspase-cleavage. Full activation also requires homodimerization and autophosphorylation of Thr-180, which are inhibited by the proto-oncogene product RAF1. Activated by RASSF1 which acts by preventing its dephosphorylation. When autophosphorylated at Thr-180, recruits STRIPAK complex and promotes PP2A-mediated dephosphorylation and inactivation of STK3. Stress-activated, pro-apoptotic kinase which, following caspase-cleavage, enters the nucleus and induces chromatin condensation followed by internucleosomal DNA fragmentation. Key component of the Hippo signaling pathway which plays a pivotal role in organ size control and tumor suppression by restricting proliferation and promoting apoptosis. The core of this pathway is composed of a kinase cascade wherein STK3/MST2 and STK4/MST1, in complex with its regulatory protein SAV1, phosphorylates and activates LATS1/2 in complex with its regulatory protein MOB1, which in turn phosphorylates and inactivates YAP1 oncoprotein and WWTR1/TAZ. Phosphorylation of YAP1 by LATS2 inhibits its translocation into the nucleus to regulate cellular genes important for cell proliferation, cell death, and cell migration. STK3/MST2 and STK4/MST1 are required to repress proliferation of mature hepatocytes, to prevent activation of facultative adult liver stem cells (oval cells), and to inhibit tumor formation. Phosphorylates NKX2-1. Phosphorylates NEK2 and plays a role in centrosome disjunction by regulating the localization of NEK2 to centrosomes, and its ability to phosphorylate CROCC and CEP250. In conjunction with SAV1, activates the transcriptional activity of ESR1 through the modulation of its phosphorylation. Positively regulates RAF1 activation via suppression of the inhibitory phosphorylation of RAF1 on 'Ser-259'. Phosphorylates MOBKL1A and RASSF2. Phosphorylates MOBKL1B on 'Thr-74'. Acts cooperatively with MOBKL1B to activate STK38. This is Serine/threonine-protein kinase 3 (Stk3) from Mus musculus (Mouse).